We begin with the raw amino-acid sequence, 310 residues long: MVYKTLFALCILTAGWRVQSLPTSAPLSVSLPTNIMPPTTIWTSSPQNTDADTASPSNGTHNNSVLPVTASAPTSLLPKNISVESREEEITSPGSNWEGTNTDPSPPGFSSTSGGVHLTTTLEEHSLGTPEAGVAATLSQSAAEPPTLISPQAPASSPSSLSTSPPEVFSVSVTTNHSSTVTSTQPTGAPTAPESPTEESSSDHTPTSHATAEPVPQEKTPPTTVSGKVMCELIDMETTTTFPRVIMQEVEHALSSGSIAAITVTVIAVVLLVFGVAAYLKIRHSSYGRLLDDHDYGSWGNYNNPLYDDS.

The first 20 residues, 1 to 20 (MVYKTLFALCILTAGWRVQS), serve as a signal peptide directing secretion. The Extracellular portion of the chain corresponds to 21-258 (LPTSAPLSVS…EVEHALSSGS (238 aa)). Residues 40-74 (TIWTSSPQNTDADTASPSNGTHNNSVLPVTASAPT) are compositionally biased toward polar residues. Positions 40-224 (TIWTSSPQNT…VPQEKTPPTT (185 aa)) are disordered. Asn-58, Asn-62, and Asn-80 each carry an N-linked (GlcNAc...) asparagine glycan. A compositionally biased stretch (polar residues) spans 92-103 (SPGSNWEGTNTD). The span at 150-209 (SPQAPASSPSSLSTSPPEVFSVSVTTNHSSTVTSTQPTGAPTAPESPTEESSSDHTPTSH) shows a compositional bias: low complexity. Residue Asn-176 is glycosylated (N-linked (GlcNAc...) asparagine). A helical transmembrane segment spans residues 259–279 (IAAITVTVIAVVLLVFGVAAY). Over 280-310 (LKIRHSSYGRLLDDHDYGSWGNYNNPLYDDS) the chain is Cytoplasmic. Ser-298 carries the phosphoserine modification.

This sequence belongs to the PARM family. Highly N-glycosylated and O-glycosylated.

Its subcellular location is the cell membrane. It is found in the golgi apparatus membrane. It localises to the endosome membrane. May regulate TLP1 expression and telomerase activity, thus enabling certain prostatic cells to resist apoptosis. The polypeptide is Prostate androgen-regulated mucin-like protein 1 homolog (PARM1) (Pongo abelii (Sumatran orangutan)).